Here is a 161-residue protein sequence, read N- to C-terminus: MGGGNPVVAQMWKLVEPVCSAEGMELVFVEFNKESQGRVLRLYLASGVPDRGVTLEDCAGISRQVNGLLDVYLPELDNYTLEVSSAGLERPLAKEIDFERFAGSRVKIRTAAPVSDRKNFTGILLGVSDGNVRLMVDDKTFVIPYGEITRAKLVNEDGVSQ.

This sequence belongs to the RimP family.

It is found in the cytoplasm. Its function is as follows. Required for maturation of 30S ribosomal subunits. The polypeptide is Ribosome maturation factor RimP (Desulfosudis oleivorans (strain DSM 6200 / JCM 39069 / Hxd3) (Desulfococcus oleovorans)).